Consider the following 447-residue polypeptide: Pup--protein ligase 2 (447 aa).

Glu-4 provides a ligand contact to Mg(2+). Arg-48 lines the ATP pocket. Tyr-50 contacts Mg(2+). Residue Asp-52 is the Proton acceptor of the active site. Glu-58 provides a ligand contact to Mg(2+). Positions 61 and 414 each coordinate ATP.

Belongs to the Pup ligase/Pup deamidase family. Pup-conjugating enzyme subfamily.

It catalyses the reaction ATP + [prokaryotic ubiquitin-like protein]-L-glutamate + [protein]-L-lysine = ADP + phosphate + N(6)-([prokaryotic ubiquitin-like protein]-gamma-L-glutamyl)-[protein]-L-lysine.. It functions in the pathway protein degradation; proteasomal Pup-dependent pathway. It participates in protein modification; protein pupylation. In terms of biological role, catalyzes the covalent attachment of the prokaryotic ubiquitin-like protein modifier Pup to the proteasomal substrate proteins, thereby targeting them for proteasomal degradation. This tagging system is termed pupylation. The ligation reaction involves the side-chain carboxylate of the C-terminal glutamate of Pup and the side-chain amino group of a substrate lysine. The polypeptide is Pup--protein ligase 2 (Rhodococcus erythropolis (Arthrobacter picolinophilus)).